The sequence spans 166 residues: MEMSNAQRLILSNQYKLMSQLDPENAEKYQRFQTIVERGYELQMRELNKDYGCITEALCKEIIDVMEMYHAMQESFRMLDADESTQVDQRRLQFLGFDIASEAQLVHYVRFLTESEGLYPQFDKGDHHFNSQMPMLEKYRRMLATWRKCPRQYHLCATELRQIFNA.

This sequence belongs to the UPF0304 family.

This is UPF0304 protein VV1_2093 from Vibrio vulnificus (strain CMCP6).